Reading from the N-terminus, the 174-residue chain is 2-hydroxy-palmitic acid dioxygenase MPO1 (174 aa).

Residues 1 to 23 lie on the Cytoplasmic side of the membrane; sequence MGEGLLDLRSQLGFYKFYHHNPK. The chain crosses the membrane as a helical span at residues 24 to 44; sequence NVLIHSIFVPTILFSGSCMLH. Residues 45–63 lie on the Lumenal side of the membrane; the sequence is RVKIYQSISLTAVLSVLFS. A helical transmembrane segment spans residues 64–84; that stretch reads IFYCLLYLPTGLLAGVLLLLL. Residues 85–98 lie on the Cytoplasmic side of the membrane; sequence NLALIDHRVDLTFK. Residues 99–119 traverse the membrane as a helical segment; sequence QELGLFTIGWIFQFVGHGVFE. The Lumenal portion of the chain corresponds to 120-131; sequence KRRPALIDNLVQ. Residues 132–152 form a helical membrane-spanning segment; sequence SLVLAPYFIMFEFLFKLGFMP. Over 153-174 the chain is Cytoplasmic; the sequence is RLKATLEHDLEIKQRNLRMQRQ.

This sequence belongs to the MPO1 family. The cofactor is Fe(2+).

The protein resides in the endoplasmic reticulum membrane. The catalysed reaction is (R)-2-hydroxyhexadecanoate + O2 = pentadecanoate + CO2 + H2O. Dioxygenase that catalyzes the alpha-oxidation of 2-hydroxy fatty acids in an iron-dependent manner. Involved in metabolism of phytosphingosine and is required for proper endoplasmic reticulum stress response. The polypeptide is 2-hydroxy-palmitic acid dioxygenase MPO1 (Saccharomyces cerevisiae (strain ATCC 204508 / S288c) (Baker's yeast)).